A 251-amino-acid chain; its full sequence is UPF0246 protein DSY0297 (251 aa).

This sequence belongs to the UPF0246 family.

This chain is UPF0246 protein DSY0297, found in Desulfitobacterium hafniense (strain Y51).